Reading from the N-terminus, the 294-residue chain is tRNA pseudouridine synthase B (294 aa).

The active-site Nucleophile is the Asp-39.

This sequence belongs to the pseudouridine synthase TruB family. Type 1 subfamily.

The catalysed reaction is uridine(55) in tRNA = pseudouridine(55) in tRNA. Its function is as follows. Responsible for synthesis of pseudouridine from uracil-55 in the psi GC loop of transfer RNAs. This is tRNA pseudouridine synthase B from Streptococcus pyogenes serotype M6 (strain ATCC BAA-946 / MGAS10394).